Here is a 104-residue protein sequence, read N- to C-terminus: Cytochrome c oxidase assembly factor 6 (104 aa).

A disordered region spans residues 1–22; sequence MGLFSFDGGKKESQPPNTRSQR. In terms of domain architecture, CHCH spans 22-76; sequence RKLCWESRDAFFQCLDKADILDAMDPKNSKSIKSHCKVENEKFEENCAHSWIKYF. Residues 25 to 35 carry the Cx9C motif motif; it reads CWESRDAFFQC. 2 disulfides stabilise this stretch: Cys25–Cys68 and Cys35–Cys57. The short motif at 57–68 is the Cx10C motif element; it reads CKVENEKFEENC.

This sequence belongs to the cytochrome c oxidase subunit 6B family. In terms of assembly, interacts with COX2.

Its subcellular location is the cytoplasm. The protein localises to the nucleus. It is found in the mitochondrion intermembrane space. Functionally, involved in the maturation of the mitochondrial respiratory chain complex IV subunit MT-CO2/COX2. Thereby, may regulate early steps of complex IV assembly. Mitochondrial respiratory chain complex IV or cytochrome c oxidase is the component of the respiratory chain that catalyzes the transfer of electrons from intermembrane space cytochrome c to molecular oxygen in the matrix and as a consequence contributes to the proton gradient involved in mitochondrial ATP synthesis. May also be required for efficient formation of respiratory supercomplexes comprised of complexes III and IV. The polypeptide is Cytochrome c oxidase assembly factor 6 (Saccharomyces cerevisiae (strain ATCC 204508 / S288c) (Baker's yeast)).